The sequence spans 156 residues: 6,7-dimethyl-8-ribityllumazine synthase (156 aa).

Residues Phe23, 57-59 (AYE), and 81-83 (AII) each bind 5-amino-6-(D-ribitylamino)uracil. 86-87 (ST) serves as a coordination point for (2S)-2-hydroxy-3-oxobutyl phosphate. His89 (proton donor) is an active-site residue. Residue Phe114 coordinates 5-amino-6-(D-ribitylamino)uracil. A (2S)-2-hydroxy-3-oxobutyl phosphate-binding site is contributed by Arg128.

The protein belongs to the DMRL synthase family.

The catalysed reaction is (2S)-2-hydroxy-3-oxobutyl phosphate + 5-amino-6-(D-ribitylamino)uracil = 6,7-dimethyl-8-(1-D-ribityl)lumazine + phosphate + 2 H2O + H(+). It participates in cofactor biosynthesis; riboflavin biosynthesis; riboflavin from 2-hydroxy-3-oxobutyl phosphate and 5-amino-6-(D-ribitylamino)uracil: step 1/2. In terms of biological role, catalyzes the formation of 6,7-dimethyl-8-ribityllumazine by condensation of 5-amino-6-(D-ribitylamino)uracil with 3,4-dihydroxy-2-butanone 4-phosphate. This is the penultimate step in the biosynthesis of riboflavin. This chain is 6,7-dimethyl-8-ribityllumazine synthase, found in Campylobacter hominis (strain ATCC BAA-381 / DSM 21671 / CCUG 45161 / LMG 19568 / NCTC 13146 / CH001A).